The following is a 211-amino-acid chain: MTSLAVLLTLADSRLPTGAHVHSGGIEEAIAAGMVTGLATLEAFLKRRVRTHGLLTASIAAAVHRGELAVDDADRETDARTPAPAARHASRSQGRGLIRLARRVWPDSGWEELGPRPHLAVVAGRVGALSGLAPEHNALHLVYITMTGSAIAAQRLLALDPAEVTVVTFQLSELCEQIAQEATAGLADLSDPLLDTLAQRHDERVRPLFVS.

The interval 71–93 is disordered; sequence DDADRETDARTPAPAARHASRSQ.

Belongs to the UreF family. UreD, UreF and UreG form a complex that acts as a GTP-hydrolysis-dependent molecular chaperone, activating the urease apoprotein by helping to assemble the nickel containing metallocenter of UreC. The UreE protein probably delivers the nickel.

The protein resides in the cytoplasm. Its function is as follows. Required for maturation of urease via the functional incorporation of the urease nickel metallocenter. The protein is Urease accessory protein UreF of Mycobacterium tuberculosis (strain ATCC 25177 / H37Ra).